Consider the following 584-residue polypeptide: MDLMNGQSSSVNIAATASEKSSSSESLSDKGSAELKKSFDAVVFDVLKVTPEEYAGQITLMDVPVFKAIQPEELASCGWNKKEKYSSAPNAVAFTRRFNHVSFWVVREILHAQTLKIRAEVLSHYIKTAKKLYELNNLHALMAVVSGLQSAPIFRLTKTWALLSRKDKATFEKLEYVMSKEDNYKRLRDYISSLKMTPCIPYLGIYLSDLTYIDSAYPSTGSILESEQRTNLMNNILRIISDLQQSCEYDIPLLPHVQKYLNSVQYIEELQKFVEDDNYKLSLKIEPGTSTPHSAASREDLVASEVGASPQSGRKNAAAEGALLPPTPPSPRNLIPHGHRKCHSLGYNFIHKMNTAEFKSATFPNAGPRHLLDDSVMEPHVPSRGQAESSTLSSGISIGSSDGSELSEETSWPAFERNRLYHSLGPGTRVSRNGYRGHMKASSSLESEDLAVHLYPGAVTIQGVLRRKTLLKEGKKPTVASWTKYWVALCGTQLFYYAAKSLKATERKHFKSTPSKNVSVVGWMVMMADDPEHPDLFLLTDSEKGNSYKFQAGNRMNAMLWFKHLSAACQSNRQQVPANLMTFE.

Polar residues predominate over residues 1–13 (MDLMNGQSSSVNI). 3 disordered regions span residues 1–29 (MDLM…SLSD), 285–338 (IEPG…IPHG), and 380–407 (HVPS…SELS). The span at 14–26 (AATASEKSSSSES) shows a compositional bias: low complexity. The Ras-GEF domain occupies 50–288 (TPEEYAGQIT…YKLSLKIEPG (239 aa)). Residues 326–329 (PTPP) carry the PXXP motif. Residues 388–404 (ESSTLSSGISIGSSDGS) are compositionally biased toward low complexity. One can recognise a PH domain in the interval 458–570 (AVTIQGVLRR…WFKHLSAACQ (113 aa)).

Its subcellular location is the cytoplasm. It localises to the cell membrane. Functionally, guanine nucleotide exchange factor. May be involved in cytoskeletal organization. This chain is Ras-specific guanine nucleotide-releasing factor RalGPS1 (RALGPS1), found in Gallus gallus (Chicken).